The following is a 292-amino-acid chain: Undecaprenyl-diphosphatase 2 (292 aa).

Transmembrane regions (helical) follow at residues 89-109, 118-138, 203-223, 232-252, and 263-283; these read WLVI…QDAI, LIAT…WYAS, FLLA…SIGG, PTIL…AWFL, and FVLY…GGAL.

This sequence belongs to the UppP family.

Its subcellular location is the cell membrane. The enzyme catalyses di-trans,octa-cis-undecaprenyl diphosphate + H2O = di-trans,octa-cis-undecaprenyl phosphate + phosphate + H(+). Its function is as follows. Catalyzes the dephosphorylation of undecaprenyl diphosphate (UPP). Confers resistance to bacitracin. The chain is Undecaprenyl-diphosphatase 2 from Frankia casuarinae (strain DSM 45818 / CECT 9043 / HFP020203 / CcI3).